The sequence spans 622 residues: Low affinity potassium transport system protein Kup (622 aa).

12 consecutive transmembrane segments (helical) span residues 9–29, 49–69, 103–123, 137–157, 165–185, 213–233, 247–267, 276–296, 337–357, 363–383, 396–416, and 419–439; these read LPAITLAAIGVVYGDIGTSPL, VFGFLSLIFWLLIFVVSIKYL, VIMGLIGGSFFYGEVVITPAI, PQLDTWIVPLSIIVLTLLFMI, VGKLFAPIMLTWFLILAGLGL, VSFIALGAVVLSITGVEALYA, WFTVVLPSLTLNYFGQGALLL, PFFLLAPDWALIPLLIIAALA, IYIPFVNWMLYVAVVIVIVSF, LAAAYGIAVTGTMVLTSILST, FVALILIAFLCVDIPLFTANL, and LLSGGWLPLSLGTVMFIVMTT.

It belongs to the HAK/KUP transporter (TC 2.A.72) family.

The protein localises to the cell inner membrane. The enzyme catalyses K(+)(in) + H(+)(in) = K(+)(out) + H(+)(out). Responsible for the low-affinity transport of potassium into the cell. Likely operates as a K(+):H(+) symporter. The chain is Low affinity potassium transport system protein Kup from Escherichia fergusonii (strain ATCC 35469 / DSM 13698 / CCUG 18766 / IAM 14443 / JCM 21226 / LMG 7866 / NBRC 102419 / NCTC 12128 / CDC 0568-73).